Here is a 279-residue protein sequence, read N- to C-terminus: Large ribosomal subunit protein mL46 (279 aa).

Lys230 is modified (N6-acetyllysine).

This sequence belongs to the mitochondrion-specific ribosomal protein mL46 family. As to quaternary structure, component of the mitochondrial large ribosomal subunit (mt-LSU). Mature mammalian 55S mitochondrial ribosomes consist of a small (28S) and a large (39S) subunit. The 28S small subunit contains a 12S ribosomal RNA (12S mt-rRNA) and 30 different proteins. The 39S large subunit contains a 16S rRNA (16S mt-rRNA), a copy of mitochondrial valine transfer RNA (mt-tRNA(Val)), which plays an integral structural role, and 52 different proteins. mL46 is located at the central protuberance.

It is found in the mitochondrion. This chain is Large ribosomal subunit protein mL46 (MRPL46), found in Homo sapiens (Human).